The chain runs to 907 residues: MCDQRPNLLGSLVLLGFFIFFVNGEECSNSSSLIGHESEFKMLQHQLRGVFTVVDDCSFRVSRFDMLSGSEVHWWGAMSSDFDNMTNDGFVISDQKLNQTFKNSSFIVRLLGNVTWDKLGVVSVWDLPTASDFGHVLLSNATESDTSKAESPPSESNDVAPGKSNNSEPFKAPTMFDNCKKLSDKYRLRWSLNAEKGYVDIGLEATTGLLNYMAFGWAKPNSTSNLMLNADVVVTGIREDGFPFADDFYITESSVCSVKEGTATGVCPDTVYEEADSVGSSVNNTKLVYGHRIDGVSFVRYRRPLNDSDNKFDFPVNSTESLTVIWALGVIKPPDVINPYYLPVNHGGVESENFGHFSLNLSDHVDECLGPLDADNKYDQDVIIADAHAPLVVTAGPSVHYPNPPNPSKVLYINKKEAPVLKVERGVPVKFSIEAGHDVSFYITSDFLGGNASLRNRTETIYAGGQETHGVLSSPSELVWAPNRNTPDQLYYHSIFQEKMGWKVQVVDGGLSDMYNNSVNLDDQQVKFFWTIVGDSISIAARGEKKSGYLAIGFGSEMTNSYAYIGWFDRNGTGHVNTYWIDGESASAVHPTTENMTYVRCKSEEGIITLEFTRPLKPSCSHRDRPECKNMIDPTTPLKVIWAMGAKWTDGQLTERNMHSVTSQRPVRVMLTRGSAEADQDLRPVLGVHGFMMFLAWGILLPGGILSARYLKHIKGDGWFKIHMYLQCSGLAIVFLGLLFAVAELNGFSFSSTHVKFGFTAIVLACAQPVNAWLRPAKPAQGELISSKRLIWEYSHSIVGQSAVVVGVVALFTGMKHLGERNGTENVDGLNLALGLWVFLCVVTVAYLEYRERGRRRARNLSRGNWVLGNVEEDDSIDLIDSRGGFRDKDDEDRNGGRMEIQLEPLK.

An N-terminal signal peptide occupies residues 1–24 (MCDQRPNLLGSLVLLGFFIFFVNG). One can recognise a DM13 domain in the interval 31 to 139 (SSLIGHESEF…ASDFGHVLLS (109 aa)). Positions 144–172 (SDTSKAESPPSESNDVAPGKSNNSEPFKA) are disordered. The segment covering 153 to 168 (PSESNDVAPGKSNNSE) has biased composition (polar residues). 2 consecutive DOMON domains span residues 184–329 (DKYR…WALG) and 524–645 (QQVK…WAMG). The 198-residue stretch at 653–850 (LTERNMHSVT…CVVTVAYLEY (198 aa)) folds into the Cytochrome b561 domain. A helical membrane pass occupies residues 685-705 (VLGVHGFMMFLAWGILLPGGI). Residues His689 and His723 each contribute to the heme b site. 4 consecutive transmembrane segments (helical) span residues 730-750 (GLAI…GFSF), 754-774 (HVKF…NAWL), 795-815 (SHSI…FTGM), and 829-849 (GLNL…AYLE). The heme b site is built by His754 and His796. Residues 884–897 (GGFRDKDDEDRNGG) are compositionally biased toward basic and acidic residues. The disordered stretch occupies residues 884–907 (GGFRDKDDEDRNGGRMEIQLEPLK).

It depends on heme b as a cofactor.

It is found in the membrane. May act as a catecholamine-responsive trans-membrane electron transporter. This Arabidopsis thaliana (Mouse-ear cress) protein is Cytochrome b561, DM13 and DOMON domain-containing protein At5g54830.